The primary structure comprises 159 residues: 2-C-methyl-D-erythritol 2,4-cyclodiphosphate synthase (159 aa).

Residues D10 and H12 each contribute to the a divalent metal cation site. 4-CDP-2-C-methyl-D-erythritol 2-phosphate-binding positions include D10 to H12 and H36 to S37. Residue H44 participates in a divalent metal cation binding. Residues D58–G60, T134–E137, F141, and R144 contribute to the 4-CDP-2-C-methyl-D-erythritol 2-phosphate site.

Belongs to the IspF family. In terms of assembly, homotrimer. Requires a divalent metal cation as cofactor.

The enzyme catalyses 4-CDP-2-C-methyl-D-erythritol 2-phosphate = 2-C-methyl-D-erythritol 2,4-cyclic diphosphate + CMP. It participates in isoprenoid biosynthesis; isopentenyl diphosphate biosynthesis via DXP pathway; isopentenyl diphosphate from 1-deoxy-D-xylulose 5-phosphate: step 4/6. Its function is as follows. Involved in the biosynthesis of isopentenyl diphosphate (IPP) and dimethylallyl diphosphate (DMAPP), two major building blocks of isoprenoid compounds. Catalyzes the conversion of 4-diphosphocytidyl-2-C-methyl-D-erythritol 2-phosphate (CDP-ME2P) to 2-C-methyl-D-erythritol 2,4-cyclodiphosphate (ME-CPP) with a corresponding release of cytidine 5-monophosphate (CMP). This is 2-C-methyl-D-erythritol 2,4-cyclodiphosphate synthase from Roseobacter denitrificans (strain ATCC 33942 / OCh 114) (Erythrobacter sp. (strain OCh 114)).